Here is a 530-residue protein sequence, read N- to C-terminus: Ubiquitin carboxyl-terminal hydrolase 17-like protein 17 (530 aa).

Positions alanine 80–lysine 375 constitute a USP domain. Catalysis depends on cysteine 89, which acts as the Nucleophile. Histidine 334 acts as the Proton acceptor in catalysis. 2 stretches are compositionally biased toward basic and acidic residues: residues serine 382–arginine 392 and aspartate 398–aspartate 411. 2 disordered regions span residues serine 382 to aspartate 411 and asparagine 477 to glutamine 530. Residues threonine 493–leucine 505 show a composition bias toward polar residues. Basic residues predominate over residues glycine 510–arginine 524.

It belongs to the peptidase C19 family. USP17 subfamily.

It localises to the nucleus. The protein resides in the endoplasmic reticulum. It carries out the reaction Thiol-dependent hydrolysis of ester, thioester, amide, peptide and isopeptide bonds formed by the C-terminal Gly of ubiquitin (a 76-residue protein attached to proteins as an intracellular targeting signal).. Functionally, deubiquitinating enzyme that removes conjugated ubiquitin from specific proteins to regulate different cellular processes that may include cell proliferation, progression through the cell cycle, apoptosis, cell migration, and the cellular response to viral infection. The polypeptide is Ubiquitin carboxyl-terminal hydrolase 17-like protein 17 (USP17L17) (Homo sapiens (Human)).